The sequence spans 381 residues: Mannitol-1-phosphate 5-dehydrogenase (381 aa).

NAD(+) is bound at residue 3-14 (AVHFGAGNIGRG).

Belongs to the mannitol dehydrogenase family.

It carries out the reaction D-mannitol 1-phosphate + NAD(+) = beta-D-fructose 6-phosphate + NADH + H(+). The chain is Mannitol-1-phosphate 5-dehydrogenase from Exiguobacterium sibiricum (strain DSM 17290 / CCUG 55495 / CIP 109462 / JCM 13490 / 255-15).